A 129-amino-acid polypeptide reads, in one-letter code: UPF0325 protein PC1_0937 (129 aa).

This sequence belongs to the UPF0325 family.

This Pectobacterium carotovorum subsp. carotovorum (strain PC1) protein is UPF0325 protein PC1_0937.